Reading from the N-terminus, the 154-residue chain is Myoglobin (154 aa).

The region spanning 2 to 148 (GLSDGEWQLV…FRNDIAAKYK (147 aa)) is the Globin domain. Serine 4 is subject to Phosphoserine. Histidine 65 provides a ligand contact to nitrite. Position 65 (histidine 65) interacts with O2. The residue at position 68 (threonine 68) is a Phosphothreonine. Histidine 94 is a heme b binding site.

Belongs to the globin family. As to quaternary structure, monomeric.

It localises to the cytoplasm. It is found in the sarcoplasm. The enzyme catalyses Fe(III)-heme b-[protein] + nitric oxide + H2O = Fe(II)-heme b-[protein] + nitrite + 2 H(+). It carries out the reaction H2O2 + AH2 = A + 2 H2O. Its function is as follows. Monomeric heme protein which primary function is to store oxygen and facilitate its diffusion within muscle tissues. Reversibly binds oxygen through a pentacoordinated heme iron and enables its timely and efficient release as needed during periods of heightened demand. Depending on the oxidative conditions of tissues and cells, and in addition to its ability to bind oxygen, it also has a nitrite reductase activity whereby it regulates the production of bioactive nitric oxide. Under stress conditions, like hypoxia and anoxia, it also protects cells against reactive oxygen species thanks to its pseudoperoxidase activity. The chain is Myoglobin (MB) from Sciurus vulgaris (Eurasian red squirrel).